Reading from the N-terminus, the 440-residue chain is MAEDMAADEVTAPPRKVLIISAGASHSVALLSGDIVCSWGRGEDGQLGHGDAEDRPSPTQLSALDGHQIVSVTCGADHTVAYSQSGMEVYSWGWGDFGRLGHGNSSDLFTPLPIKALHGIRIKQIACGDSHCLAVTMEGEVQSWGRNQNGQLGLGDTEDSLVPQKIQAFEGIRIKMVAAGAEHTAAVTEDGDLYGWGWGRYGNLGLGDRTDRLVPERVTSTGGEKMSMVACGWRHTISVSYSGALYTYGWSKYGQLGHGDLEDHLIPHKLEALSNSFISQISGGWRHTMALTSDGKLYGWGWNKFGQVGVGNNLDQCSPVQVRFPDDQKVVQVSCGWRHTLAVTERNNVFAWGRGTNGQLGIGESVDRNFPKIIEALSVDGASGQHIESSNIDPSSGKSWVSPAERYAVVPDETGLTDGSSKGNGGDISVPQTDVKRVRI.

The residue at position 2 (A2) is an N-acetylalanine. RCC1 repeat units follow at residues 2–31 (AEDM…VALL), 32–84 (SGDI…AYSQ), 86–137 (GMEV…AVTM), 139–189 (GEVQ…AVTE), 190–241 (DGDL…SVSY), 243–293 (GALY…ALTS), 294–345 (DGKL…AVTE), and 347–399 (NNVF…SGKS). The tract at residues 397–423 (GKSWVSPAERYAVVPDETGLTDGSSKG) is required for interaction with COP1. The disordered stretch occupies residues 413–440 (ETGLTDGSSKGNGGDISVPQTDVKRVRI).

As to quaternary structure, homodimer in the absence of UV-B, but absorption of UV-B induces monomerization of UVR8 and interaction with COP1. Interacts with RUP1, RUP2 and histone H2B.

The protein localises to the nucleus. The protein resides in the cytoplasm. Its subcellular location is the cytosol. Functionally, UV-B specific signaling component that acts as a UV-B photoreceptor and plays a key role in establishing UV-protective responses in plants. Upon UV-B irradiation, UVR8 undergoes an immediate switch from homodimer to monomer, accumulates in the nucleus, interacts with the photomorphogenic repressor COP1 and regulates the expression of the transcription factor HY5 by associating with chromatin (through histone H2B binding) in the HY5 promoter region. UVR8 is involved in controlling aspects of leaf growth and morphogenesis in response to UV-B, is required for normal progression of endocycle and has a regulatory role in stomatal differentiation. Is required for plant circadian clock response to photomorphogenic UV-B light, partly through the transcriptional activation of responsive clock genes. Promotes photosynthetic efficiency at elevated levels of UV-B. Plays a role in mediating the effects of UV-B radiation on pathogen resistance by controlling the expression of the sinapate biosynthetic pathway. The two tryptophans, Trp-285 and Trp-233, serve collectively as the UV-B chromophore. This is Ultraviolet-B receptor UVR8 from Arabidopsis thaliana (Mouse-ear cress).